The following is a 122-amino-acid chain: Large ribosomal subunit protein uL14c (122 aa).

This sequence belongs to the universal ribosomal protein uL14 family. In terms of assembly, part of the 50S ribosomal subunit.

Its subcellular location is the plastid. It localises to the chloroplast. Functionally, binds to 23S rRNA. The chain is Large ribosomal subunit protein uL14c from Tupiella akineta (Green alga).